The primary structure comprises 968 residues: RNA polymerase-associated protein RapA (968 aa).

The 171-residue stretch at 164-334 (DVGRRHAPRV…FARLRLLDPN (171 aa)) folds into the Helicase ATP-binding domain. 177–184 (DEVGLGKT) provides a ligand contact to ATP. Residues 280 to 283 (DEAH) carry the DEAH box motif. The Helicase C-terminal domain occupies 490–662 (RVEWLMGYLT…YLASPDQTEG (173 aa)).

This sequence belongs to the SNF2/RAD54 helicase family. RapA subfamily. As to quaternary structure, interacts with the RNAP. Has a higher affinity for the core RNAP than for the holoenzyme. Its ATPase activity is stimulated by binding to RNAP.

In terms of biological role, transcription regulator that activates transcription by stimulating RNA polymerase (RNAP) recycling in case of stress conditions such as supercoiled DNA or high salt concentrations. Probably acts by releasing the RNAP, when it is trapped or immobilized on tightly supercoiled DNA. Does not activate transcription on linear DNA. Probably not involved in DNA repair. This chain is RNA polymerase-associated protein RapA, found in Escherichia fergusonii (strain ATCC 35469 / DSM 13698 / CCUG 18766 / IAM 14443 / JCM 21226 / LMG 7866 / NBRC 102419 / NCTC 12128 / CDC 0568-73).